A 220-amino-acid chain; its full sequence is WAP four-disulfide core domain protein 1 (220 aa).

A signal peptide spans 1 to 31; the sequence is MPLTGVGPGSCRRQIIRALCLLLLLLHAGSA. The tract at residues 46–70 is disordered; sequence KSRAEEAGAPGGPRQPRADRCPPPP. Positions 59–108 constitute a WAP domain; that stretch reads RQPRADRCPPPPRTLPPGACQAARCQADSECPRHRRCCYNGCAYACLEAV. Intrachain disulfides connect cysteine 66/cysteine 96, cysteine 78/cysteine 100, cysteine 83/cysteine 95, and cysteine 89/cysteine 104. The tract at residues 199–220 is disordered; that stretch reads EYPEGDSKNVAEPGRGQQKHFQ.

The protein localises to the secreted. Its function is as follows. Has growth inhibitory activity. The protein is WAP four-disulfide core domain protein 1 (WFDC1) of Homo sapiens (Human).